A 1976-amino-acid polypeptide reads, in one-letter code: MAQRTGLEDPERYLFVDRAVIYNPATQADWTAKKLVWIPSERHGFEAASIKEERGDEVMVELAENGKKAMVNKDDIQKMNPPKFSKVEDMAELTCLNEASVLHNLKDRYYSGLIYTYSGLFCVVINPYKNLPIYSENIIEMYRGKKRHEMPPHIYAISESAYRCMLQDREDQSILCTGESGAGKTENTKKVIQYLAHVASSHKGRKDHNIPGELERQLLQANPILESFGNAKTVKNDNSSRFGKFIRINFDVTGYIVGANIETYLLEKSRAVRQAKDERTFHIFYQLLSGAGEHLKSDLLLEGFNNYRFLSNGYIPIPGQQDKDNFQETMEAMHIMGFSHEEILSMLKVVSSVLQFGNISFKKERNTDQASMPENTVAQKLCHLLGMNVMEFTRAILTPRIKVGRDYVQKAQTKEQADFAVEALAKATYERLFRWLVHRINKALDRTKRQGASFIGILDIAGFEIFELNSFEQLCINYTNEKLQQLFNHTMFILEQEEYQREGIEWNFIDFGLDLQPCIDLIERPANPPGVLALLDEECWFPKATDKTFVEKLVQEQGSHSKFQKPRQLKDKADFCIIHYAGKVDYKADEWLMKNMDPLNDNVATLLHQSSDRFVAELWKDVDRIVGLDQVTGMTETAFGSAYKTKKGMFRTVGQLYKESLTKLMATLRNTNPNFVRCIIPNHEKRAGKLDPHLVLDQLRCNGVLEGIRICRQGFPNRIVFQEFRQRYEILTPNAIPKGFMDGKQACERMIRALELDPNLYRIGQSKIFFRAGVLAHLEEERDLKITDIIIFFQAVCRGYLARKAFAKKQQQLSALKVLQRNCAAYLKLRHWQWWRVFTKVKPLLQVTRQEEELQAKDEELLKVKEKQTKVEGELEEMERKHQQLLEEKNILAEQLQAETELFAEAEEMRARLAAKKQELEEILHDLESRVEEEEERNQILQNEKKKMQAHIQDLEEQLDEEEGARQKLQLEKVTAEAKIKKMEEEVLLLEDQNSKFIKEKKLMEDRIAECSSQLAEEEEKAKNLAKIRNKQEVMISDLEERLKKEEKTRQELEKAKRKLDGETTDLQDQIAELQAQVDELKVQLTKKEEELQGALARGDDETLHKNNALKVARELQAQIAELQEDFESEKASRNKAEKQKRDLSEELEALKTELEDTLDTTAAQQELRTKREQEVAELKKALEDETKNHEAQIQDMRQRHATALEELSEQLEQAKRFKANLEKNKQGLETDNKELACEVKVLQQVKAESEHKRKKLDAQVQELHAKVSEGDRLRVELAEKANKLQNELDNVSTLLEEAEKKGIKFAKDAAGLESQLQDTQELLQEETRQKLNLSSRIRQLEEEKNSLQEQQEEEEEARKNLEKQVLALQSQLADTKKKVDDDLGTIESLEEAKKKLLKDVEALSQRLEEKVLAYDKLEKTKNRLQQELDDLTVDLDHQRQIVSNLEKKQKKFDQLLAEEKGISARYAEERDRAEAEAREKETKALSLARALEEALEAKEEFERQNKQLRADMEDLMSSKDDVGKNVHELEKSKRALEQQVEEMRTQLEELEDELQATEDAKLRLEVNMQAMKAQFERDLQTRDEQNEEKKRLLLKQVRELEAELEDERKQRALAVASKKKMEIDLKDLEAQIEAANKARDEVIKQLRKLQAQMKDYQRELEEARASRDEIFAQSKESEKKLKSLEAEILQLQEELASSERARRHAEQERDELADEIANSASGKSALLDEKRRLEARIAQLEEELEEEQSNMELLNDRFRKTTLQVDTLNTELAAERSAAQKSDNARQQLERQNKELKAKLQELEGAVKSKFKATISALEAKIGQLEEQLEQEAKERAAANKLVRRTEKKLKEIFMQVEDERRHADQYKEQMEKANARMKQLKRQLEEAEEEATRANASRRKLQRELDDATEANEGLSREVSTLKNRLRRGGPISFSSSRSGRRQLHIEGASLELSDDDTESKTSDVNDTQPPQSE.

The residue at position 18 (arginine 18) is an Omega-N-methylarginine. The region spanning 31 to 81 (TAKKLVWIPSERHGFEAASIKEERGDEVMVELAENGKKAMVNKDDIQKMNP) is the Myosin N-terminal SH3-like domain. The Myosin motor domain maps to 85 to 783 (SKVEDMAELT…VLAHLEEERD (699 aa)). Residue 178–185 (GESGAGKT) coordinates ATP. Position 442 is an N6-acetyllysine (lysine 442). Residues 661–683 (LTKLMATLRNTNPNFVRCIIPNH) are actin-binding. Residues 786 to 815 (ITDIIIFFQAVCRGYLARKAFAKKQQQLSA) form the IQ domain. Positions 845–1976 (LQVTRQEEEL…VNDTQPPQSE (1132 aa)) form a coiled coil. The segment at 1125 to 1175 (EDFESEKASRNKAEKQKRDLSEELEALKTELEDTLDTTAAQQELRTKREQE) is disordered. The span at 1129-1155 (SEKASRNKAEKQKRDLSEELEALKTEL) shows a compositional bias: basic and acidic residues. Serine 1145 carries the post-translational modification Phosphoserine. Residues lysine 1241, lysine 1301, and lysine 1645 each carry the N6-acetyllysine modification. 2 disordered regions span residues 1697–1718 (ASSERARRHAEQERDELADEIA) and 1874–1976 (KANA…PQSE). Basic and acidic residues predominate over residues 1698-1708 (SSERARRHAEQ). Arginine 1930 bears the Omega-N-methylarginine mark. Phosphoserine occurs at positions 1935, 1937, 1938, and 1939. Arginine 1940 carries the post-translational modification Omega-N-methylarginine. A phosphoserine mark is found at serine 1952 and serine 1956. Position 1960 is a phosphothreonine (threonine 1960). Polar residues predominate over residues 1967 to 1976 (VNDTQPPQSE). Position 1975 is a phosphoserine (serine 1975).

Belongs to the TRAFAC class myosin-kinesin ATPase superfamily. Myosin family. As to quaternary structure, myosin is a hexameric protein that consists of 2 heavy chain subunits (MHC), 2 alkali light chain subunits (MLC) and 2 regulatory light chain subunits (MLC-2). Interacts with PLEKHG6. Interacts with ECPAS. Interacts with LARP6. Interacts with MCC. Interacts with KIF26B. Interacts with CFAP95. In terms of processing, phosphorylated by ABL2. As to expression, in newborn kidney, expressed in the mesenchyme and ureteric buds.

The protein resides in the cell projection. Its subcellular location is the lamellipodium. Involved with LARP6 in the stabilization of type I collagen mRNAs for CO1A1 and CO1A2. During cell spreading, plays an important role in cytoskeleton reorganization, focal contacts formation (in the central part but not the margins of spreading cells), and lamellipodial extension; this function is mechanically antagonized by MYH9. Cellular myosin that appears to play a role in cytokinesis, cell shape, and specialized functions such as secretion and capping. The chain is Myosin-10 (Myh10) from Mus musculus (Mouse).